Here is a 330-residue protein sequence, read N- to C-terminus: D-lactate dehydrogenase (330 aa).

Residues 156 to 157 (RI), Asp176, 206 to 207 (VP), 233 to 235 (AAR), and Asp259 each bind NAD(+). Arg235 is an active-site residue. The active site involves Glu264. Residue His296 is the Proton donor of the active site.

The protein belongs to the D-isomer specific 2-hydroxyacid dehydrogenase family.

The catalysed reaction is (R)-lactate + NAD(+) = pyruvate + NADH + H(+). The protein is D-lactate dehydrogenase (ldhD) of Staphylococcus epidermidis (strain ATCC 35984 / DSM 28319 / BCRC 17069 / CCUG 31568 / BM 3577 / RP62A).